Here is a 257-residue protein sequence, read N- to C-terminus: Thiazole synthase (257 aa).

The Schiff-base intermediate with DXP role is filled by Lys-96. 1-deoxy-D-xylulose 5-phosphate contacts are provided by residues Gly-157, Ala-184–Gly-185, and Asn-206–Thr-207.

This sequence belongs to the ThiG family. As to quaternary structure, homotetramer. Forms heterodimers with either ThiH or ThiS.

It localises to the cytoplasm. It catalyses the reaction [ThiS sulfur-carrier protein]-C-terminal-Gly-aminoethanethioate + 2-iminoacetate + 1-deoxy-D-xylulose 5-phosphate = [ThiS sulfur-carrier protein]-C-terminal Gly-Gly + 2-[(2R,5Z)-2-carboxy-4-methylthiazol-5(2H)-ylidene]ethyl phosphate + 2 H2O + H(+). It functions in the pathway cofactor biosynthesis; thiamine diphosphate biosynthesis. Its function is as follows. Catalyzes the rearrangement of 1-deoxy-D-xylulose 5-phosphate (DXP) to produce the thiazole phosphate moiety of thiamine. Sulfur is provided by the thiocarboxylate moiety of the carrier protein ThiS. In vitro, sulfur can be provided by H(2)S. The protein is Thiazole synthase of Bartonella bacilliformis (strain ATCC 35685 / KC583 / Herrer 020/F12,63).